The chain runs to 277 residues: Shikimate dehydrogenase (NADP(+)) (277 aa).

Shikimate-binding positions include 17 to 19 and threonine 64; that span reads SRS. Residue lysine 68 is the Proton acceptor of the active site. Residues asparagine 88 and aspartate 103 each coordinate shikimate. NADP(+) is bound by residues 128 to 132, 152 to 157, and leucine 217; these read GAGGS and NRTLDR. Tyrosine 219 is a shikimate binding site. Residue glycine 240 participates in NADP(+) binding.

The protein belongs to the shikimate dehydrogenase family. In terms of assembly, homodimer.

The enzyme catalyses shikimate + NADP(+) = 3-dehydroshikimate + NADPH + H(+). Its pathway is metabolic intermediate biosynthesis; chorismate biosynthesis; chorismate from D-erythrose 4-phosphate and phosphoenolpyruvate: step 4/7. In terms of biological role, involved in the biosynthesis of the chorismate, which leads to the biosynthesis of aromatic amino acids. Catalyzes the reversible NADPH linked reduction of 3-dehydroshikimate (DHSA) to yield shikimate (SA). In Rhodopseudomonas palustris (strain BisB18), this protein is Shikimate dehydrogenase (NADP(+)).